A 177-amino-acid chain; its full sequence is Large ribosomal subunit protein uL6 (177 aa).

The protein belongs to the universal ribosomal protein uL6 family. In terms of assembly, part of the 50S ribosomal subunit.

In terms of biological role, this protein binds to the 23S rRNA, and is important in its secondary structure. It is located near the subunit interface in the base of the L7/L12 stalk, and near the tRNA binding site of the peptidyltransferase center. The sequence is that of Large ribosomal subunit protein uL6 from Dinoroseobacter shibae (strain DSM 16493 / NCIMB 14021 / DFL 12).